The chain runs to 380 residues: Cytochrome b (380 aa).

4 helical membrane-spanning segments follow: residues 34 to 54, 78 to 99, 114 to 134, and 179 to 199; these read SGSL…FLAM, WFLR…YCHI, WNVG…GYVL, and FFPF…IHLV. Heme b is bound by residues H84 and H98. Positions 183 and 197 each coordinate heme b. Residue H202 participates in a ubiquinone binding. The next 4 membrane-spanning stretches (helical) occupy residues 227-247, 289-309, 321-341, and 348-369; these read TKDT…ALLF, LGGV…PLLN, LSQA…WIGS, and YVLL…GFPI.

The protein belongs to the cytochrome b family. As to quaternary structure, the main subunits of complex b-c1 are: cytochrome b, cytochrome c1 and the Rieske protein. The cofactor is heme b.

Its subcellular location is the mitochondrion inner membrane. Component of the ubiquinol-cytochrome c reductase complex (complex III or cytochrome b-c1 complex) that is part of the mitochondrial respiratory chain. The b-c1 complex mediates electron transfer from ubiquinol to cytochrome c. Contributes to the generation of a proton gradient across the mitochondrial membrane that is then used for ATP synthesis. This chain is Cytochrome b (MT-CYB), found in Strongylocentrotus purpuratus (Purple sea urchin).